Reading from the N-terminus, the 108-residue chain is uncharacterized protein (108 aa).

A disordered region spans residues 81–108; sequence TNHHQQQQNHQNQQQQQQQPNGIFENNI. The segment covering 83-99 has biased composition (low complexity); it reads HHQQQQNHQNQQQQQQQ.

This is an uncharacterized protein from Dictyostelium discoideum (Social amoeba).